Here is a 233-residue protein sequence, read N- to C-terminus: MLTRKQYELLRFINERLKESGVPPSFDEMKDALDLRSKSGIHRLITALEERGFIRRLPNRARAIEVIKLPELAASGGGRRGFTPSVIEGNLGKVRRGGGGGADEAERPVAVPVMGRIAAGTPIEALQTCSHTISLPPDMLGAGEHYALEVRGDSMVDAGILDGDMALIQRNPTADTGDIVVALIDDEEATLKRFRRRGASIALEPANAAYEVRILPPNRVQIQGRLVGIYRKY.

The H-T-H motif DNA-binding region spans 26-46; it reads FDEMKDALDLRSKSGIHRLIT. Catalysis depends on for autocatalytic cleavage activity residues Ser-154 and Lys-192.

It belongs to the peptidase S24 family. As to quaternary structure, homodimer.

It carries out the reaction Hydrolysis of Ala-|-Gly bond in repressor LexA.. Represses a number of genes involved in the response to DNA damage (SOS response), including recA and lexA. In the presence of single-stranded DNA, RecA interacts with LexA causing an autocatalytic cleavage which disrupts the DNA-binding part of LexA, leading to derepression of the SOS regulon and eventually DNA repair. The chain is LexA repressor from Nitrobacter winogradskyi (strain ATCC 25391 / DSM 10237 / CIP 104748 / NCIMB 11846 / Nb-255).